The following is a 59-amino-acid chain: Large ribosomal subunit protein bL32 (59 aa).

The interval 1–59 is disordered; the sequence is MAVQQNKKSPSKRGMHRAHDFLTAPVIAIEPSTGEAHRRHHISPNGFYRGRKVVKGKDE. A compositionally biased stretch (basic residues) spans 49-59; sequence RGRKVVKGKDE.

This sequence belongs to the bacterial ribosomal protein bL32 family.

In Laribacter hongkongensis (strain HLHK9), this protein is Large ribosomal subunit protein bL32.